A 444-amino-acid chain; its full sequence is Pestheic acid cluster transcriptional regulator 2 (444 aa).

A compositionally biased stretch (polar residues) spans 1-22 (MEAADPNNNLTITSPSTLLSNP). A disordered region spans residues 1-31 (MEAADPNNNLTITSPSTLLSNPTQPPAQPLK). The segment at residues 36-63 (CHACASSKVKCHKEKPTCSRCRKRGITC) is a DNA-binding region (zn(2)-C6 fungal-type). Residues 326–348 (ARVGSGVSTHTTAGQYEPQVEQQ) form a disordered region. The span at 331-348 (GVSTHTTAGQYEPQVEQQ) shows a compositional bias: polar residues.

It localises to the nucleus. Its function is as follows. Transcription factor that, with ptaR1 and ptaR3, coregulates the expression of the gene cluster that mediates the biosynthesis of pestheic acid, a diphenyl ether which is a biosynthetic precursor of the unique chloropupukeananes. This is Pestheic acid cluster transcriptional regulator 2 from Pestalotiopsis fici (strain W106-1 / CGMCC3.15140).